A 399-amino-acid polypeptide reads, in one-letter code: Tryptophan synthase beta chain (399 aa).

The residue at position 90 (Lys90) is an N6-(pyridoxal phosphate)lysine.

Belongs to the TrpB family. Tetramer of two alpha and two beta chains. Requires pyridoxal 5'-phosphate as cofactor.

It catalyses the reaction (1S,2R)-1-C-(indol-3-yl)glycerol 3-phosphate + L-serine = D-glyceraldehyde 3-phosphate + L-tryptophan + H2O. Its pathway is amino-acid biosynthesis; L-tryptophan biosynthesis; L-tryptophan from chorismate: step 5/5. The beta subunit is responsible for the synthesis of L-tryptophan from indole and L-serine. This chain is Tryptophan synthase beta chain, found in Bacillus pumilus (strain SAFR-032).